A 503-amino-acid chain; its full sequence is Long-chain-aldehyde dehydrogenase (503 aa).

An NAD(+)-binding site is contributed by 218-224 (GYGAEVG). Residues E262 and C301 contribute to the active site.

The protein belongs to the aldehyde dehydrogenase family. In terms of assembly, homotetramer.

The enzyme catalyses a long-chain fatty aldehyde + NAD(+) + H2O = a long-chain fatty acid + NADH + 2 H(+). With respect to regulation, completely inhibited by p-chloromercuribenzoate and N-ethylmaleimide. Strongly inhibited by iodoacetate. Inhibited by Pb(2+), Fe(3+), Ag(+) and Hg(2+) and partially inhibited by several other metal ions Mn(2+), Zn(2+) and Cu(2+). In terms of biological role, aldehyde dehydrogenase that shows activity toward n-alkanals (C(4) to C(14)), with a preference for longer carbon chains. The best substrate is tetradecanal. This is Long-chain-aldehyde dehydrogenase (ald1) from Acinetobacter sp.